The sequence spans 149 residues: Large ribosomal subunit protein uL24 (149 aa).

Residues 114–149 (RKIIERSGGTPEVEAVPEKSEEEKEEKEKEEEKSEE) form a disordered region. Residues 129–149 (VPEKSEEEKEEKEKEEEKSEE) are compositionally biased toward basic and acidic residues.

The protein belongs to the universal ribosomal protein uL24 family. Part of the 50S ribosomal subunit.

In terms of biological role, one of two assembly initiator proteins, it binds directly to the 5'-end of the 23S rRNA, where it nucleates assembly of the 50S subunit. Functionally, located at the polypeptide exit tunnel on the outside of the subunit. The polypeptide is Large ribosomal subunit protein uL24 (Methanopyrus kandleri (strain AV19 / DSM 6324 / JCM 9639 / NBRC 100938)).